A 117-amino-acid polypeptide reads, in one-letter code: Large ribosomal subunit protein bL20 (117 aa).

The protein belongs to the bacterial ribosomal protein bL20 family.

Its function is as follows. Binds directly to 23S ribosomal RNA and is necessary for the in vitro assembly process of the 50S ribosomal subunit. It is not involved in the protein synthesizing functions of that subunit. The polypeptide is Large ribosomal subunit protein bL20 (Rickettsia massiliae (strain Mtu5)).